Consider the following 785-residue polypeptide: Terminal nucleotidyltransferase 4A (785 aa).

Residues 56 to 184 (AAGRAAPAAG…QFHPGRRKRE (129 aa)) form a disordered region. Residues 68–85 (GPAPAASSPPPAPGPAAL) are compositionally biased toward pro residues. 2 stretches are compositionally biased toward low complexity: residues 86–98 (PPALLTALGPAAD) and 106–145 (SPSLSSSSSSSSSNAESGTESPGCSSSSSSSTSLGRAGSG). Positions 290 and 292 each coordinate Mg(2+). Positions 353, 378, 396, and 397 each coordinate ATP. Positions 421-480 (NLGMLLVEFFELYGRNFNYLKTGIRIKEGGAYIAKEEIMKAMTSGYRPSMLCIEDPLLPG) constitute a PAP-associated domain. Residues asparagine 481 and arginine 485 each coordinate ATP. Residues 593-611 (PQLLSSGSSASSVSSLSGS) are compositionally biased toward low complexity. 2 disordered regions span residues 593–625 (PQLLSSGSSASSVSSLSGSDIDSDTPPCTTPSV) and 731–785 (KGSH…SLSR). The span at 757–774 (RGHHQYNRTGWRRKKHAH) shows a compositional bias: basic residues.

This sequence belongs to the DNA polymerase type-B-like family. In terms of assembly, component of a nuclear TRAMP-like complex, an ATP-dependent exosome regulatory complex consisting of a helicase (MTREX), an oligadenylate polymerase (TENT4B or TENT4A), and a substrate specific RNA-binding factor (ZCCHC7 or ZCCHC8). Several TRAMP-like complexes exist with specific compositions and are associated with nuclear, or nucleolar RNA exosomes. Requires Mg(2+) as cofactor. Mn(2+) serves as cofactor.

It is found in the cytoplasm. The protein localises to the nucleus. It localises to the nucleoplasm. It carries out the reaction RNA(n) + ATP = RNA(n)-3'-adenine ribonucleotide + diphosphate. Terminal nucleotidyltransferase that catalyzes preferentially the transfer of ATP and GTP on RNA 3' poly(A) tail creating a heterogeneous 3' poly(A) tail leading to mRNAs stabilization by protecting mRNAs from active deadenylation. Also functions as a catalytic subunit of a TRAMP-like complex which has a poly(A) RNA polymerase activity and is involved in a post-transcriptional quality control mechanism. Polyadenylation with short oligo(A) tails is required for the degradative activity of the exosome on several of its nuclear RNA substrates. Has no terminal uridylyltransferase activity, and does not play a role in replication-dependent histone mRNA degradation via uridylation. The polypeptide is Terminal nucleotidyltransferase 4A (Mus musculus (Mouse)).